We begin with the raw amino-acid sequence, 193 residues long: uncharacterized protein (193 aa).

A run of 3 helical transmembrane segments spans residues 5–25 (LILL…FIIF), 63–83 (IFIL…LINI), and 90–110 (ILTF…LTPA).

The protein localises to the cell membrane. This is an uncharacterized protein from Methanocaldococcus jannaschii (strain ATCC 43067 / DSM 2661 / JAL-1 / JCM 10045 / NBRC 100440) (Methanococcus jannaschii).